Here is a 334-residue protein sequence, read N- to C-terminus: Photosystem II assembly protein Ycf48 (334 aa).

Residues 1–22 form the signal peptide; it reads MAKMLKLWRLVLLAAFSLLLMA.

It belongs to the Ycf48 family. In terms of assembly, part of early PSII assembly complexes which includes D1 (psbA) and PsbI; not found in mature PSII. Binds to the lumenal side of PSII complexes. Interacts with YidC.

It localises to the cellular thylakoid lumen. In terms of biological role, a factor required for optimal assembly of photosystem II (PSII), acting in the early stages of PSII assembly. Also plays a role in replacement of photodamaged D1 (psbA). Assists YidC in synthesis of chlorophyll-binding proteins. This Synechococcus sp. (strain JA-3-3Ab) (Cyanobacteria bacterium Yellowstone A-Prime) protein is Photosystem II assembly protein Ycf48.